Reading from the N-terminus, the 102-residue chain is Cysteine-rich venom protein VAR9 (102 aa).

Residues 1–19 (MILLKLYLTLAAILCQSRG) form the signal peptide. The SCP domain maps to 41 to 80 (NKHNDLRRTVDPPAKNMLKMSWDNIIAESAKRAALRCNYK).

It belongs to the CRISP family. Post-translationally, contains 8 disulfide bonds. As to expression, expressed by the venom gland.

The protein resides in the secreted. Blocks ryanodine receptors, and potassium channels. This Varanus varius (Lace monitor lizard) protein is Cysteine-rich venom protein VAR9.